The sequence spans 421 residues: Acyl-coenzyme A thioesterase 5 (421 aa).

Residues S232, D326, and H360 each act as charge relay system in the active site. Positions A419–L421 match the Microbody targeting signal motif.

It belongs to the C/M/P thioester hydrolase family. In terms of tissue distribution, highly expressed in spleen, brain, testis and proximal and distal intestine; expressed at low level in the liver.

The protein resides in the peroxisome. The enzyme catalyses hexadecanoyl-CoA + H2O = hexadecanoate + CoA + H(+). The catalysed reaction is decanoyl-CoA + H2O = decanoate + CoA + H(+). It carries out the reaction octanoyl-CoA + H2O = octanoate + CoA + H(+). It catalyses the reaction dodecanoyl-CoA + H2O = dodecanoate + CoA + H(+). The enzyme catalyses tetradecanoyl-CoA + H2O = tetradecanoate + CoA + H(+). The catalysed reaction is octadecanoyl-CoA + H2O = octadecanoate + CoA + H(+). It carries out the reaction eicosanoyl-CoA + H2O = eicosanoate + CoA + H(+). It catalyses the reaction (9Z)-octadecenoyl-CoA + H2O = (9Z)-octadecenoate + CoA + H(+). The enzyme catalyses (9Z,12Z)-octadecadienoyl-CoA + H2O = (9Z,12Z)-octadecadienoate + CoA + H(+). The catalysed reaction is (5Z,8Z,11Z,14Z)-eicosatetraenoyl-CoA + H2O = (5Z,8Z,11Z,14Z)-eicosatetraenoate + CoA + H(+). It carries out the reaction (9Z)-hexadecenoyl-CoA + H2O = (9Z)-hexadecenoate + CoA + H(+). It functions in the pathway lipid metabolism; fatty acid metabolism. Its function is as follows. Catalyzes the hydrolysis of acyl-CoAs into free fatty acids and coenzyme A (CoASH), regulating their respective intracellular levels. Mainly active on medium-chain acyl-CoAs. Seems to be involved in intraperoxisomal regulation of acyl-CoA levels, but not CoASH levels. May have a function in termination of beta-oxidation of fatty acids. This is Acyl-coenzyme A thioesterase 5 (Acot5) from Mus musculus (Mouse).